Reading from the N-terminus, the 465-residue chain is Box C/D snoRNA protein 1 (465 aa).

The segment at 1–72 (MEFAAENEGK…GSRQRPEEIP (72 aa)) is disordered. Phosphoserine is present on serine 25. Residues 56-70 (EIGDGEEGSRQRPEE) are compositionally biased toward basic and acidic residues. Residues lysine 79, lysine 108, lysine 118, lysine 138, lysine 148, lysine 157, lysine 168, lysine 178, and lysine 195 each participate in a glycyl lysine isopeptide (Lys-Gly) (interchain with G-Cter in SUMO2) cross-link. Residues cysteine 215, cysteine 218, cysteine 227, cysteine 230, cysteine 235, cysteine 239, histidine 243, and cysteine 249 each contribute to the Zn(2+) site. The HIT-type zinc-finger motif lies at 215–249 (CETCGTEEAKYRCPRCMRYSCSLPCVKKHKAELTC). Lysine 454 participates in a covalent cross-link: Glycyl lysine isopeptide (Lys-Gly) (interchain with G-Cter in SUMO2).

This sequence belongs to the BCD1 family. As to quaternary structure, interacts with FBL, SNU13, NOP58, NUFIP1, RUVBL1, RUVBL2 and TAF9. Interacts (via HIT-type zinc finger) with the RUVBL1/RUVBL2 complex in the presence of ADP.

Its function is as follows. Required for box C/D snoRNAs accumulation involved in snoRNA processing, snoRNA transport to the nucleolus and ribosome biogenesis. The protein is Box C/D snoRNA protein 1 (ZNHIT6) of Pongo abelii (Sumatran orangutan).